The chain runs to 620 residues: Chaperone protein DnaK (620 aa).

The residue at position 197 (Thr-197) is a Phosphothreonine; by autocatalysis. The tract at residues 597 to 620 (AMANKNNAEQPKKKDDDVIDAEVE) is disordered.

The protein belongs to the heat shock protein 70 family.

Its function is as follows. Acts as a chaperone. This Helicobacter acinonychis (strain Sheeba) protein is Chaperone protein DnaK.